Reading from the N-terminus, the 185-residue chain is Large ribosomal subunit protein uL22 (185 aa).

A disordered region spans residues 160 to 185; the sequence is VSHDDSQKKKVSKKKLARQKEKMMRE.

Belongs to the universal ribosomal protein uL22 family.

This chain is Large ribosomal subunit protein uL22 (RpL17), found in Maconellicoccus hirsutus (Pink hibiscus mealybug).